The primary structure comprises 687 residues: MIHHNNYPQLRIELASPEQIRAWAERRLPNGEVVGQVTQASTFHYKTHKPERDGLFCEKIFGPIRSGICSCGNSKSVDEKKEYSNFCKQCGVEFTDSRVRRYRMGYIKLACPVTHVWYLKRLPSYIANILAKPLKELENLVYGDTYPNLFLARPVAKKPNLLRLRGLCNYDNQSWIKILSRFFSTRGFEIFQGREIATGGHAIKKQLASLDLKSVFNSAYLEWKELSEVESTEDEWEDQTIQRRKDFLIRRMKLSKHFLHTNIKPEWMVLDVLPVLPPELRPMIELSEGDVITSDFNELYRKIIYRNNILLDLLLKSAFTPEGLIICQKKLIQEAVDALIDNGIRGQPLRDSNNRPYKSFSEVIEGKEGRFRENLLGKRVDYSGRSVIVVGPSLQLHQCGLPREMAIELFQSFVIRGLIGRHLARNLRDAKNIIRNKEIFIWKILQEVMQGHPVLLNRAPTLHRLGIQAFQPVLIEGRAIRLHPLVCGGFNADFDGDQMAVHVPLSIEAQTEARVLMFSHTNLLSPATGDPIAVPSQDMLLGLYVLTIENSQGIYGNRYYPNERTKDPISSFSRIPYFSNYDDILRAKEQERVDLHSPLWLRWQKDLRIITSLTRELPIEIQYESSGISFQIYENYQIRKGQSEDILSLYILTTAGRILFNQQIEEAIQSTLEASQHRNQQLLAITI.

Zn(2+) is bound by residues Cys-69, Cys-71, Cys-87, and Cys-90. Mg(2+) is bound by residues Asp-493, Asp-495, and Asp-497.

It belongs to the RNA polymerase beta' chain family. RpoC1 subfamily. In terms of assembly, in plastids the minimal PEP RNA polymerase catalytic core is composed of four subunits: alpha, beta, beta', and beta''. When a (nuclear-encoded) sigma factor is associated with the core the holoenzyme is formed, which can initiate transcription. Mg(2+) serves as cofactor. It depends on Zn(2+) as a cofactor.

The protein resides in the plastid. The protein localises to the chloroplast. It catalyses the reaction RNA(n) + a ribonucleoside 5'-triphosphate = RNA(n+1) + diphosphate. DNA-dependent RNA polymerase catalyzes the transcription of DNA into RNA using the four ribonucleoside triphosphates as substrates. In Angiopteris evecta (Mule's foot fern), this protein is DNA-directed RNA polymerase subunit beta'.